The following is a 2255-amino-acid chain: Non-reducing polyketide synthase nvfA (2255 aa).

Residues 13 to 251 are N-terminal acylcarrier protein transacylase domain (SAT); sequence ILFGPQSSDM…HHPDHTAAVE (239 aa). The region spanning 365–781 is the Ketosynthase family 3 (KS3) domain; the sequence is VRPIAVTGMA…GSNAAIVLRQ (417 aa). Active-site for beta-ketoacyl synthase activity residues include cysteine 530, histidine 665, and histidine 704. Positions 887 to 1187 are malonyl-CoA:ACP transacylase (MAT) domain; it reads LCFGGQNGNT…QASDLKSPQA (301 aa). Catalysis depends on serine 974, which acts as the For acyl/malonyl transferase activity. Residues 1229 to 1357 are N-terminal hotdog fold; that stretch reads EPMGLVQVLE…GRISLHPFDS (129 aa). The 308-residue stretch at 1229-1536 folds into the PKS/mFAS DH domain; it reads EPMGLVQVLE…FTSVSIRALT (308 aa). Residues 1232 to 1535 are product template (PT) domain; it reads GLVQVLEKRP…TFTSVSIRAL (304 aa). Catalysis depends on histidine 1262, which acts as the Proton acceptor; for dehydratase activity. Residues 1385 to 1536 form a C-terminal hotdog fold region; that stretch reads SSSGLKGSAV…FTSVSIRALT (152 aa). Aspartate 1443 serves as the catalytic Proton donor; for dehydratase activity. Residues 1581–1655 enclose the Carrier domain; that stretch reads TNKFPAIQAM…CLVQAIFPGA (75 aa). Serine 1615 is modified (O-(pantetheine 4'-phosphoryl)serine). The segment at 1809–2042 is methyltransferase (CMeT) domain; sequence HHASEHTLLR…GYNWVNWSCN (234 aa). Residues 2109–2227 are thioesterase (TE) domain; sequence LLIHGGGHVM…ILSFYCPTDY (119 aa). The active-site For thioesterase activity is serine 2194.

It carries out the reaction 3 malonyl-CoA + acetyl-CoA + 2 S-adenosyl-L-methionine = 3,5-dimethylorsellinate + 2 S-adenosyl-L-homocysteine + 3 CO2 + 4 CoA. Its pathway is secondary metabolite biosynthesis; terpenoid biosynthesis. Its function is as follows. Non-reducing polyketide synthase; part of the gene cluster that mediates the biosynthesis of novofumigatonin, a heavily oxygenated meroterpenoid containing a unique orthoester moiety. The first step of the pathway is the synthesis of 3,5-dimethylorsellinic acid (DMOA) by the polyketide synthase nvfA via condensation of one acetyl-CoA starter unit with 3 malonyl-CoA units and 2 methylations. DMOA is then converted to farnesyl-DMOA by the farnesyltransferase nvfB. Epoxydation by FAD-dependent monooxygenase nvfK, followed by a protonation-initiated cyclization catalyzed by the terpene cyclase nvfL leads to the production of asnavolin H. The short chain dehydrogenase nvfC then as a 3-OH dehydrogenase of asnovolin H to yield chemesin D. There are two branches to synthesize asnovolin A from chemesin D. In one branch, chemesin D undergoes Baeyer-Villiger oxidation by nvfH, methylation by nvfJ, and enoyl reduction by the nvfM D enoylreductase that reduces the double bond between C-5'and C-6', to form respectively asnovolin I, asnovolin K, and asnovolin A. In the other branch, the methylation precedes the Baeyer-Villiger oxidation and the enoyl reduction to yield asnovolin A via the asnovolin J intermediate. Asnovolin A is further converted to fumigatonoid A by the Fe(II)/2-oxoglutarate-dependent dioxygenase nvfI that catalyzes an endoperoxidation reaction. The alpha/beta hydrolase nvfD then acts as an epimerase that converts fumigatonoid A to its C-5' epimer, which then undergoes spontaneous or nvfD-catalyzed lactonization. The following step utilizes the ketoreductase nvfG to produce fumigatonoid B. The dioxygenase nvfE further converts fumigatonoid B into fumigatonoid C. Finally the Fe(II)/2-oxoglutarate-dependent dioxygenase nvfF catalyzes two rounds of oxidation to transform fumigatonoid C into the end product, novofumigatonin A. The sequence is that of Non-reducing polyketide synthase nvfA from Aspergillus novofumigatus (strain IBT 16806).